The primary structure comprises 396 residues: 3-amino-4-hydroxybenzoate 2-monooxygenase PtmB3 (396 aa).

FAD is bound by residues Ala-19, 38–39 (EQ), and Arg-112. The active-site Proton acceptor is the Tyr-217. Residue Asp-295 participates in FAD binding. The disordered stretch occupies residues 352 to 371 (RERGHEFHLPDGPQQRLRDR).

It belongs to the 6-hydroxynicotinate 3-monooxygenase family. FAD is required as a cofactor.

The catalysed reaction is 3-amino-4-hydroxybenzoate + NADPH + O2 + H(+) = 3-amino-2,4-dihydroxybenzoate + NADP(+) + H2O. It participates in antibiotic biosynthesis. In terms of biological role, part of a gene cluster involved in the biosynthesis of thioplatensimycin (thioPTM) and platensimycin (PTM), potent and selective inhibitors of bacterial and mammalian fatty acid synthases. Catalyzes the hydroxylation of 3-amino-4-hydroxybenzoate (3,4-AHBA) to 3-amino-2,4-dihydroxybenzoate (3,2,4-ADHBA). The polypeptide is 3-amino-4-hydroxybenzoate 2-monooxygenase PtmB3 (Streptomyces platensis).